The following is a 68-amino-acid chain: Large ribosomal subunit protein bL31 (68 aa).

Residues C16, C18, C36, and C39 each contribute to the Zn(2+) site.

This sequence belongs to the bacterial ribosomal protein bL31 family. Type A subfamily. As to quaternary structure, part of the 50S ribosomal subunit. Requires Zn(2+) as cofactor.

In terms of biological role, binds the 23S rRNA. The polypeptide is Large ribosomal subunit protein bL31 (Lachnospira eligens (strain ATCC 27750 / DSM 3376 / VPI C15-48 / C15-B4) (Eubacterium eligens)).